A 421-amino-acid polypeptide reads, in one-letter code: Fasciclin-like arabinogalactan protein ARB_02922 (421 aa).

The first 17 residues, 1–17 (MLLYYILVALWATVTYA), serve as a signal peptide directing secretion. FAS1 domains lie at 18–167 (KSFS…DRPL) and 169–296 (LPQS…SDVL). Asn52, Asn75, Asn80, Asn120, Asn145, Asn181, Asn223, and Asn300 each carry an N-linked (GlcNAc...) asparagine glycan. The interval 300–401 (NDTAKPVPNA…NTPQPGAAAT (102 aa)) is disordered. Composition is skewed to gly residues over residues 344–356 (TSGG…GGGE) and 372–387 (SGGG…GGPG). A compositionally biased stretch (low complexity) spans 388–401 (PTATNTPQPGAAAT). Gly397 carries GPI-anchor amidated glycine lipidation. A propeptide spans 398–421 (AAATERAKAGLAAVVGLGVVLINA) (removed in mature form).

This sequence belongs to the fasciclin-like AGP family.

The protein resides in the cell membrane. Functionally, may be a cell surface adhesion protein. The chain is Fasciclin-like arabinogalactan protein ARB_02922 from Arthroderma benhamiae (strain ATCC MYA-4681 / CBS 112371) (Trichophyton mentagrophytes).